Consider the following 174-residue polypeptide: Gamma-crystallin C (174 aa).

2 consecutive Beta/gamma crystallin 'Greek key' domains span residues 2–40 (GKITLYEDKAFQGRSYESTTDCPNLQTYLSRCNSIRVES) and 41–83 (GCWM…CLIP). Cys-23 carries the post-translational modification S-methylcysteine. Residues 84 to 87 (QTGS) form a connecting peptide region. Beta/gamma crystallin 'Greek key' domains lie at 88 to 128 (HRLR…HVLE) and 129 to 171 (GCWV…RRVV).

It belongs to the beta/gamma-crystallin family. In terms of assembly, monomer.

Its function is as follows. Crystallins are the dominant structural components of the vertebrate eye lens. This Macaca mulatta (Rhesus macaque) protein is Gamma-crystallin C (CRYGC).